The following is a 100-amino-acid chain: Urease subunit gamma (100 aa).

It belongs to the urease gamma subunit family. Heterotrimer of UreA (gamma), UreB (beta) and UreC (alpha) subunits. Three heterotrimers associate to form the active enzyme.

The protein localises to the cytoplasm. The catalysed reaction is urea + 2 H2O + H(+) = hydrogencarbonate + 2 NH4(+). The protein operates within nitrogen metabolism; urea degradation; CO(2) and NH(3) from urea (urease route): step 1/1. The chain is Urease subunit gamma from Bordetella bronchiseptica (strain ATCC BAA-588 / NCTC 13252 / RB50) (Alcaligenes bronchisepticus).